The following is a 1555-amino-acid chain: Regulating synaptic membrane exocytosis protein 2 (1555 aa).

The segment at 1–35 (MSAPLGPRGRPAPTPAASQPPPQPEMPDLSHLTEE) is disordered. A compositionally biased stretch (pro residues) spans 10-25 (RPAPTPAASQPPPQPE). The region spanning 26-154 (MPDLSHLTEE…TKSGAWFYNS (129 aa)) is the RabBD domain. An FYVE-type zinc finger spans residues 86 to 142 (KGDAPTCGICHKTKFADGCGHNCSYCQTKFCARCGGRVSLRSNKVMWVCNLCRKQQE). Zn(2+)-binding residues include cysteine 92, cysteine 95, cysteine 108, cysteine 111, cysteine 116, cysteine 119, cysteine 134, and cysteine 137. Polar residues predominate over residues 154–163 (SGSNTPQQPD). The interval 154–530 (SGSNTPQQPD…STPEYTSCDD (377 aa)) is disordered. Basic and acidic residues predominate over residues 170–185 (LRSEEAPQEKKAKLHE). Residues 259-268 (YVPSDSTMPR) are compositionally biased toward polar residues. Composition is skewed to basic and acidic residues over residues 287–298 (EPDHLNYRDSNR), 317–335 (RDEYERQRREEEYQARYRS), 351–370 (EQMRIHAEVSRARHERRHSD), and 379–403 (EDSRISLLRMDRPSRQRSVSERRAA). Serine 369 is modified (phosphoserine). Residues 418–432 (AQGQSSYPQRTTNHS) are compositionally biased toward polar residues. Over residues 444-461 (DRPELRRADSLRKQHHLD) the composition is skewed to basic and acidic residues. Residues 479-490 (RNDSLSSDQSES) are compositionally biased toward polar residues. The span at 497–506 (RPHKSKKGGK) shows a compositional bias: basic residues. Positions 590 to 676 (DGSVPRDSGA…EPQVELVVSR (87 aa)) constitute a PDZ domain. Residue threonine 611 is modified to Phosphothreonine. Residues 682 to 716 (PRIPDSTHAQLESSSSSFESQKMDRPSISVTSPMS) form a disordered region. A phosphoserine mark is found at serine 713 and serine 716. Positions 743–866 (FVPRVQIKLW…ALLDDEPHWY (124 aa)) constitute a C2 1 domain. Disordered stretches follow at residues 877–913 (PLPHPSPYMPRRQLHGESPTRRLQRSKRISDSEVSDY), 935–1145 (STLS…KRNS), 1180–1207 (YRSGWDPHRGADTVSTKSSDSDVSDVSA), 1268–1288 (LEKNDGSQSDTAVGALGTSGK), and 1307–1332 (KSRSASQLSQTEGGGKKLRSTVQRST). Residues 935–953 (STLSVPEQVMSSNHCSPSG) show a composition bias toward polar residues. 2 stretches are compositionally biased toward basic and acidic residues: residues 996–1014 (RMDRHRVMDDHYSSERDSH) and 1025–1071 (QTSE…ERAD). Low complexity predominate over residues 1092–1114 (ALSRSHPRTGSVQTSPSSTPVTG). Phosphoserine is present on serine 1106. Basic and acidic residues-rich tracts occupy residues 1128–1141 (TLERMITEDMDSTR) and 1180–1190 (YRSGWDPHRGA). Phosphoserine is present on residues serine 1200 and serine 1276. The 119-residue stretch at 1401-1519 (AMGDIQVGMM…ELSNMVIGWF (119 aa)) folds into the C2 2 domain. A phosphoserine mark is found at serine 1540 and serine 1543.

Heterodimer with PCLO. Part of a ternary complex involving PCLO and EPAC2. Interacts with RAB3C, RAB3D and RAB26. Binds RAB3A and RAB3B that have been activated by GTP-binding. Interacts with TSPOAP1 and RIMBP2. Interacts with PPFIA3 and PPFIA4. Interacts via its zinc finger with the first C2 domain of UNC13A. Forms a complex consisting of UNC13A, RIMS2 and RAB3A. In terms of tissue distribution, highly expressed in hippocampus, brain cortex, cerebellum and olfactory bulb. Detected at intermediate levels in midbrain, hindbrain and spinal cord, and at low levels in testis.

It is found in the cell membrane. The protein localises to the synapse. The protein resides in the presynaptic cell membrane. Functionally, rab effector involved in exocytosis. May act as scaffold protein. Plays a role in dendrite formation by melanocytes. This chain is Regulating synaptic membrane exocytosis protein 2 (Rims2), found in Rattus norvegicus (Rat).